A 435-amino-acid polypeptide reads, in one-letter code: Salicylate hydroxylase (435 aa).

12–41 (RVAIVGGGISGLALALSLCKHSHLNVQLFE) is a binding site for FAD.

The cofactor is FAD.

It carries out the reaction salicylate + NADH + O2 + 2 H(+) = catechol + CO2 + NAD(+) + H2O. Its pathway is aromatic compound metabolism; naphthalene degradation. The chain is Salicylate hydroxylase (nahG) from Pseudomonas putida (Arthrobacter siderocapsulatus).